The primary structure comprises 199 residues: 3-isopropylmalate dehydratase small subunit (199 aa).

It belongs to the LeuD family. LeuD type 1 subfamily. Heterodimer of LeuC and LeuD.

It catalyses the reaction (2R,3S)-3-isopropylmalate = (2S)-2-isopropylmalate. It participates in amino-acid biosynthesis; L-leucine biosynthesis; L-leucine from 3-methyl-2-oxobutanoate: step 2/4. Catalyzes the isomerization between 2-isopropylmalate and 3-isopropylmalate, via the formation of 2-isopropylmaleate. This chain is 3-isopropylmalate dehydratase small subunit, found in Pseudoalteromonas translucida (strain TAC 125).